A 314-amino-acid chain; its full sequence is Methionyl-tRNA formyltransferase (314 aa).

A (6S)-5,6,7,8-tetrahydrofolate-binding site is contributed by 111-114 (SLLP).

Belongs to the Fmt family.

The enzyme catalyses L-methionyl-tRNA(fMet) + (6R)-10-formyltetrahydrofolate = N-formyl-L-methionyl-tRNA(fMet) + (6S)-5,6,7,8-tetrahydrofolate + H(+). Its function is as follows. Attaches a formyl group to the free amino group of methionyl-tRNA(fMet). The formyl group appears to play a dual role in the initiator identity of N-formylmethionyl-tRNA by promoting its recognition by IF2 and preventing the misappropriation of this tRNA by the elongation apparatus. The sequence is that of Methionyl-tRNA formyltransferase from Nitrobacter winogradskyi (strain ATCC 25391 / DSM 10237 / CIP 104748 / NCIMB 11846 / Nb-255).